Consider the following 384-residue polypeptide: 1-deoxy-D-xylulose 5-phosphate reductoisomerase (384 aa).

7 residues coordinate NADPH: T10, G11, S12, I13, R37, N38, and N124. Residue K125 participates in 1-deoxy-D-xylulose 5-phosphate binding. Position 126 (E126) interacts with NADPH. D150 is a binding site for Mn(2+). 1-deoxy-D-xylulose 5-phosphate is bound by residues S151, E152, S176, and H199. Residue E152 coordinates Mn(2+). G205 contributes to the NADPH binding site. Positions 212, 217, 218, and 221 each coordinate 1-deoxy-D-xylulose 5-phosphate. E221 is a Mn(2+) binding site.

Belongs to the DXR family. It depends on Mg(2+) as a cofactor. Requires Mn(2+) as cofactor.

It carries out the reaction 2-C-methyl-D-erythritol 4-phosphate + NADP(+) = 1-deoxy-D-xylulose 5-phosphate + NADPH + H(+). It functions in the pathway isoprenoid biosynthesis; isopentenyl diphosphate biosynthesis via DXP pathway; isopentenyl diphosphate from 1-deoxy-D-xylulose 5-phosphate: step 1/6. Catalyzes the NADPH-dependent rearrangement and reduction of 1-deoxy-D-xylulose-5-phosphate (DXP) to 2-C-methyl-D-erythritol 4-phosphate (MEP). In Clostridium perfringens (strain SM101 / Type A), this protein is 1-deoxy-D-xylulose 5-phosphate reductoisomerase.